We begin with the raw amino-acid sequence, 330 residues long: Bifunctional pinoresinol-lariciresinol reductase 2 (330 aa).

NADP(+) contacts are provided by residues glycine 28 to glycine 34, arginine 53, and lysine 62. Lysine 156 (proton acceptor) is an active-site residue. Residue arginine 160 coordinates NADP(+). Residue histidine 288 participates in substrate binding.

Belongs to the NmrA-type oxidoreductase family. Isoflavone reductase subfamily. In terms of assembly, dimer. As to expression, expressed in leaves, stems, leaves and seeds.

It carries out the reaction (+)-lariciresinol + NADP(+) = (+)-pinoresinol + NADPH + H(+). The enzyme catalyses (-)-secoisolariciresinol + NADP(+) = (+)-lariciresinol + NADPH + H(+). In terms of biological role, reductase involved in lignan biosynthesis. Catalyzes the enantioselective conversion of (+)-pinoresinol into (+)-lariciresinol and of (+)-lariciresinol into (-)-secoisolariciresinol. Abstracts the 4R-hydride from the NADPH cofactor during catalysis. The sequence is that of Bifunctional pinoresinol-lariciresinol reductase 2 (PLR_Lu2) from Linum usitatissimum (Flax).